The following is a 357-amino-acid chain: 3-isopropylmalate dehydrogenase (357 aa).

Substrate is bound by residues R97, R107, R135, and D224. Residues D224, D248, and D252 each contribute to the Mg(2+) site. 282–294 (GSAPDIAGKNIAN) contacts NAD(+).

Belongs to the isocitrate and isopropylmalate dehydrogenases family. LeuB type 1 subfamily. Homodimer. It depends on Mg(2+) as a cofactor. Mn(2+) is required as a cofactor.

It is found in the cytoplasm. The catalysed reaction is (2R,3S)-3-isopropylmalate + NAD(+) = 4-methyl-2-oxopentanoate + CO2 + NADH. It functions in the pathway amino-acid biosynthesis; L-leucine biosynthesis; L-leucine from 3-methyl-2-oxobutanoate: step 3/4. Its function is as follows. Catalyzes the oxidation of 3-carboxy-2-hydroxy-4-methylpentanoate (3-isopropylmalate) to 3-carboxy-4-methyl-2-oxopentanoate. The product decarboxylates to 4-methyl-2 oxopentanoate. The polypeptide is 3-isopropylmalate dehydrogenase (Prochlorococcus marinus subsp. pastoris (strain CCMP1986 / NIES-2087 / MED4)).